Consider the following 1215-residue polypeptide: RNA-dependent RNA polymerase 1 (1215 aa).

The protein belongs to the RdRP family. As to quaternary structure, cid12, hrr1 and rdp1 interact forming the RNA-directed RNA polymerase complex (RDRC). The RDRC complex interacts with the RITS complex via interaction between ago1 and hrr1. Clr4 has a role in mediating this interaction.

It localises to the cytoplasm. The protein localises to the nucleus. The protein resides in the chromosome. It is found in the telomere. Its subcellular location is the centromere. The enzyme catalyses RNA(n) + a ribonucleoside 5'-triphosphate = RNA(n+1) + diphosphate. Has a role in the RNA interference (RNAi) pathway which is important for heterochromatin formation, accurate chromosome segregation, centromere cohesion and telomere function during mitosis and meiosis. Required for both post-transcriptional and transcriptional gene silencing. Required for silencing at the centromeres and for initiation of transcriptionally silent heterochromatin at the mating type locus. Promotes histone H3 'Lys-10' methylation necessary for centromere function. Required for recruitment of swi6 and cohesin to an ectopic dg repeat. A member of the RNA-directed RNA polymerase complex (RDRC) which is involved in the generation of small interfering RNAs (siRNAs) and mediates their association with the RNA-induced transcriptional silencing (RITS) complex. RITS acts as a priming complex for dsRNA synthesis at the site of non-coding centromeric RNA. Its RNA-dependent RNA polymerase activity is critical in siRNA production necessary for heterochromatin formation. The protein is RNA-dependent RNA polymerase 1 (rdp1) of Schizosaccharomyces pombe (strain 972 / ATCC 24843) (Fission yeast).